A 514-amino-acid polypeptide reads, in one-letter code: Na(+)/H(+) antiporter NhaB (514 aa).

The next 11 membrane-spanning stretches (helical) occupy residues 13–33 (FMGNSPDWYKLAIITFLIINP), 34–54 (LIFFFVDPFIAGWLLVVEFIF), 96–116 (VILLLVFMVAGIYFMKQLLLF), 136–156 (CFASAFLSAFLDALTVIAVVI), 203–223 (LMMHAGVGTALGGVMTMVGEP), 236–256 (FVTFFIRMSPVTIPVFFAGLA), 304–324 (ALIGIWLIVALALHLAEVGII), 349–369 (EEALPFTALLTVFFSVVAVII), 392–412 (LFYLFNGLLSAISDNVFVGTV), 448–468 (ATPNGQAAFLFLLTSALSPLI), and 479–499 (ALPYTIVMTLLGLLAVEFWLV).

It belongs to the NhaB Na(+)/H(+) (TC 2.A.34) antiporter family.

It is found in the cell inner membrane. It carries out the reaction 2 Na(+)(in) + 3 H(+)(out) = 2 Na(+)(out) + 3 H(+)(in). Functionally, na(+)/H(+) antiporter that extrudes sodium in exchange for external protons. This is Na(+)/H(+) antiporter NhaB from Proteus mirabilis (strain HI4320).